The following is a 510-amino-acid chain: DNA nucleotidylexotransferase (510 aa).

The short motif at 11–17 (PRRKQPK) is the Nuclear localization signal element. The BRCT domain maps to 27–124 (KYDIKFKDIA…QPVEIERKHR (98 aa)). The tract at residues 254 to 258 (VGLRT) is involved in DNA binding. A 2'-deoxyribonucleoside 5'-triphosphate is bound by residues 329 to 334 (GFRRGN) and 338 to 341 (HDVD). Mg(2+)-binding residues include aspartate 339, aspartate 341, and aspartate 434. 449–450 (GW) lines the a 2'-deoxyribonucleoside 5'-triphosphate pocket.

Belongs to the DNA polymerase type-X family. Requires Mg(2+) as cofactor.

The protein resides in the nucleus. The catalysed reaction is DNA(n) + a 2'-deoxyribonucleoside 5'-triphosphate = DNA(n+1) + diphosphate. In terms of biological role, template-independent DNA polymerase which catalyzes the random addition of deoxynucleoside 5'-triphosphate to the 3'-end of a DNA initiator. One of the in vivo functions of this enzyme is the addition of nucleotides at the junction (N region) of rearranged Ig heavy chain and T-cell receptor gene segments during the maturation of B- and T-cells. The protein is DNA nucleotidylexotransferase (DNTT) of Ambystoma mexicanum (Axolotl).